Consider the following 80-residue polypeptide: uncharacterized protein (80 aa).

Belongs to the 2-oxoacid dehydrogenase family.

This is an uncharacterized protein from Mycobacterium tuberculosis (strain CDC 1551 / Oshkosh).